Consider the following 581-residue polypeptide: Arginine--tRNA ligase (581 aa).

A 'HIGH' region motif is present at residues 126 to 136; sequence PNLAKEMHVGH.

Belongs to the class-I aminoacyl-tRNA synthetase family. In terms of assembly, monomer.

It is found in the cytoplasm. It carries out the reaction tRNA(Arg) + L-arginine + ATP = L-arginyl-tRNA(Arg) + AMP + diphosphate. This is Arginine--tRNA ligase from Shewanella woodyi (strain ATCC 51908 / MS32).